A 540-amino-acid polypeptide reads, in one-letter code: Signal peptide peptidase-like 2 (540 aa).

The first 27 residues, Met-1–Ala-27, serve as a signal peptide directing secretion. Over Gly-28–Glu-196 the chain is Lumenal. Asn-83 carries N-linked (GlcNAc...) asparagine glycosylation. Residues Ser-95–Met-173 enclose the PA domain. N-linked (GlcNAc...) asparagine glycosylation occurs at Asn-176. A helical transmembrane segment spans residues Val-197–Ser-217. Topologically, residues Ala-218–Glu-248 are cytoplasmic. A helical transmembrane segment spans residues Ile-249–Tyr-269. Residues Lys-270 to Glu-278 lie on the Lumenal side of the membrane. A helical transmembrane segment spans residues Leu-279–Leu-299. Over Leu-300–Pro-319 the chain is Cytoplasmic. Residues Ile-320–Val-340 traverse the membrane as a helical segment. Residues Tyr-341–Ser-345 are Lumenal-facing. A helical membrane pass occupies residues Phe-346–Val-366. At His-367–Asn-370 the chain is on the cytoplasmic side. The helical transmembrane segment at Leu-371–Val-391 threads the bilayer. Residue Asp-385 is part of the active site. Over Ser-392–Gly-429 the chain is Lumenal. Residues Gly-430–Leu-450 form a helical membrane-spanning segment. Asp-438 is a catalytic residue. The Cytoplasmic portion of the chain corresponds to Arg-451 to Thr-462. A helical membrane pass occupies residues Gly-463–Leu-483. Residues Asn-484–Gly-488 lie on the Lumenal side of the membrane. The chain crosses the membrane as a helical span at residues His-489 to Ala-509. The PAL motif lies at Pro-492–Leu-494. Residues Arg-510–Lys-540 are Cytoplasmic-facing.

The protein belongs to the peptidase A22B family. In terms of processing, glycosylated. Ubiquitous.

It is found in the endosome membrane. Functionally, intramembrane-cleaving aspartic protease (I-CLiP) that cleaves type II membrane signal peptides in the hydrophobic plane of the membrane. The polypeptide is Signal peptide peptidase-like 2 (SPPL2) (Arabidopsis thaliana (Mouse-ear cress)).